Reading from the N-terminus, the 403-residue chain is Serine/threonine transporter SstT (403 aa).

9 consecutive transmembrane segments (helical) span residues 16 to 36 (QIVI…AIAL), 45 to 65 (FVSA…MASI), 79 to 99 (ILWL…VASM), 138 to 158 (ALLN…GVAL), 175 to 195 (GVTL…FGLV), 214 to 234 (LAVL…LIVF), 295 to 315 (MAGA…TLGI), 327 to 347 (MVAA…LLLI), and 353 to 373 (LFGI…IIGV).

It belongs to the dicarboxylate/amino acid:cation symporter (DAACS) (TC 2.A.23) family.

It localises to the cell inner membrane. The enzyme catalyses L-serine(in) + Na(+)(in) = L-serine(out) + Na(+)(out). The catalysed reaction is L-threonine(in) + Na(+)(in) = L-threonine(out) + Na(+)(out). Functionally, involved in the import of serine and threonine into the cell, with the concomitant import of sodium (symport system). The polypeptide is Serine/threonine transporter SstT (Pseudomonas putida (strain W619)).